We begin with the raw amino-acid sequence, 336 residues long: Mitochondrial import receptor subunit TOM40 homolog (336 aa).

Residues 1-58 (MGNVLAASSPAPPPAGSPPVPGLVSVPPGFTMPPVAGLTPTPDKKEPQEERLPNPGTF) form a disordered region. The span at 10-21 (PAPPPAGSPPVP) shows a compositional bias: pro residues. Residues 42–52 (PDKKEPQEERL) show a composition bias toward basic and acidic residues.

It belongs to the Tom40 family. In terms of assembly, forms part of the preprotein translocase complex of the outer mitochondrial membrane (TOM complex). Interacts with mitochondrial targeting sequences.

The protein localises to the mitochondrion outer membrane. Its function is as follows. Channel-forming protein essential for import of protein precursors into mitochondria. This is Mitochondrial import receptor subunit TOM40 homolog (tomm40) from Xenopus laevis (African clawed frog).